The chain runs to 443 residues: Nuclear hormone receptor family member nhr-60 (443 aa).

Low complexity predominate over residues 1 to 20; the sequence is MIQSSSSISQDSLDLPSILS. The tract at residues 1-40 is disordered; the sequence is MIQSSSSISQDSLDLPSILSTFSADEPEDEPSPTAVKSTK. Positions 44–121 form a DNA-binding region, nuclear receptor; the sequence is PTECLICGNS…VGMNPLAMEV (78 aa). 2 consecutive NR C4-type zinc fingers follow at residues 47-67 and 83-104; these read CLICGNSANGHHYDVASCNGC and CKAKGDCFDLTKRKVPLKCRAC. The 244-residue stretch at 196-439 folds into the NR LBD domain; the sequence is NEFSGLEYLL…KDLVMRVIED (244 aa). A disordered region spans residues 225–249; that stretch reads LRRDQLGPPRLPKPPSPGKPRDSQH. A compositionally biased stretch (pro residues) spans 233–242; sequence PRLPKPPSPG.

It belongs to the nuclear hormone receptor family.

It localises to the nucleus. Orphan nuclear receptor (Potential). Required for embryonic and larval morphogenesis and probably for seam cell positioning and migration. The polypeptide is Nuclear hormone receptor family member nhr-60 (Caenorhabditis elegans).